Consider the following 787-residue polypeptide: Serine/threonine-protein kinase PLK4 (787 aa).

Positions 14-268 (YEVQHLLGKG…LEQVLRHPFM (255 aa)) constitute a Protein kinase domain. ATP is bound by residues 20-28 (LGKGGFASV) and K43. D139 functions as the Proton acceptor in the catalytic mechanism. The interval 311–336 (SNESRSSQRLRSIEKSAQSSSNPQML) is disordered. One can recognise a Cryptic POLO box 1 (CPB1) domain in the interval 386 to 505 (EQQMRVPPLN…ARFVGLVKSK (120 aa)). The Cryptic POLO box 2 (CPB2) domain maps to 506 to 613 (TPKITYFSSL…GRRPLTDVSH (108 aa)). One can recognise a POLO box domain in the interval 675-755 (PIKRINIPDV…IPQVKLRLKC (81 aa)).

It belongs to the protein kinase superfamily. Ser/Thr protein kinase family. CDC5/Polo subfamily. In terms of assembly, homodimer. In terms of processing, ubiquitinated by the SCF(Slimb) ubiquitin ligase complex; leading to its degradation by the proteasome during interphase and regulating centriole number and ensuring the block to centriole reduplication.

It localises to the cytoplasm. The protein localises to the cytoskeleton. Its subcellular location is the microtubule organizing center. It is found in the centrosome. The protein resides in the centriole. The catalysed reaction is L-seryl-[protein] + ATP = O-phospho-L-seryl-[protein] + ADP + H(+). The enzyme catalyses L-threonyl-[protein] + ATP = O-phospho-L-threonyl-[protein] + ADP + H(+). Functionally, serine/threonine-protein kinase that plays a central role in centriole duplication. Able to trigger procentriole formation on the surface of the mother centriole cylinder, using mother centriole as a platform, leading to the recruitment of centriole biogenesis proteins such as sas-6. When overexpressed, it is able to induce centrosome amplification through the simultaneous generation of multiple procentrioles adjoining each parental centriole during S phase. Centrosome amplification following overexpression can initiate tumorigenesis, highlighting the importance of centrosome regulation in cancers. This chain is Serine/threonine-protein kinase PLK4 (SAK), found in Drosophila willistoni (Fruit fly).